The chain runs to 265 residues: Triosephosphate isomerase (265 aa).

A substrate-binding site is contributed by 8–10 (NWK). The active-site Electrophile is the H103. E182 serves as the catalytic Proton acceptor. Substrate-binding positions include G188, S226, and 247 to 248 (GG).

The protein belongs to the triosephosphate isomerase family. As to quaternary structure, homodimer.

The protein resides in the cytoplasm. The enzyme catalyses D-glyceraldehyde 3-phosphate = dihydroxyacetone phosphate. Its pathway is carbohydrate biosynthesis; gluconeogenesis. The protein operates within carbohydrate degradation; glycolysis; D-glyceraldehyde 3-phosphate from glycerone phosphate: step 1/1. Its function is as follows. Involved in the gluconeogenesis. Catalyzes stereospecifically the conversion of dihydroxyacetone phosphate (DHAP) to D-glyceraldehyde-3-phosphate (G3P). The polypeptide is Triosephosphate isomerase (Psychrobacter sp. (strain PRwf-1)).